Consider the following 1049-residue polypeptide: Bifunctional cytochrome P450/NADPH--P450 reductase (1049 aa).

The cytochrome P450 stretch occupies residues 2-472 (TIKEMPQPKT…STEQSAKKVR (471 aa)). Tyr-52 contacts (9Z)-hexadecenoate. Cys-401 is a heme binding site. The interval 473–1049 (KKAENAHNTP…GRYAKDVWAG (577 aa)) is NADPH--P450 reductase. One can recognise a Flavodoxin-like domain in the interval 483–622 (LLVLYGSNMG…TYEEWREHMW (140 aa)). FMN is bound by residues 489 to 494 (SNMGTA), 536 to 539 (SYNG), 570 to 572 (CGD), and 578 to 580 (TYQ). Residues 660-892 (HGAFSTNVVA…STPQSEFTLP (233 aa)) enclose the FAD-binding FR-type domain.

This sequence in the N-terminal section; belongs to the cytochrome P450 family. It depends on FAD as a cofactor. The cofactor is FMN. Heme is required as a cofactor.

It localises to the cytoplasm. It catalyses the reaction 2 oxidized [cytochrome P450] + NADPH = 2 reduced [cytochrome P450] + NADP(+) + H(+). The catalysed reaction is an organic molecule + reduced [NADPH--hemoprotein reductase] + O2 = an alcohol + oxidized [NADPH--hemoprotein reductase] + H2O + H(+). With respect to regulation, inhibited by N-(12-imidazolyl-dodecanoyl)-L-leucine. Its function is as follows. Functions as a fatty acid monooxygenase. Catalyzes hydroxylation of fatty acids at omega-1, omega-2 and omega-3 positions. Shows activity toward medium and long-chain fatty acids, with optimum chain lengths of 12, 14 and 16 carbons (lauric, myristic, and palmitic acids). Able to metabolize some of these primary metabolites to secondary and tertiary products. Marginal activity towards short chain lengths of 8-10 carbons. Hydroxylates highly branched fatty acids, which play an essential role in membrane fluidity regulation. Also displays a NADPH-dependent reductase activity in the C-terminal domain, which allows electron transfer from NADPH to the heme iron of the cytochrome P450 N-terminal domain. Involved in inactivation of quorum sensing signals of other competing bacteria by oxidazing efficiently acyl homoserine lactones (AHLs), molecules involved in quorum sensing signaling pathways, and their lactonolysis products acyl homoserines (AHs). The protein is Bifunctional cytochrome P450/NADPH--P450 reductase of Priestia megaterium (strain ATCC 14581 / DSM 32 / CCUG 1817 / JCM 2506 / NBRC 15308 / NCIMB 9376 / NCTC 10342 / NRRL B-14308 / VKM B-512 / Ford 19) (Bacillus megaterium).